We begin with the raw amino-acid sequence, 105 residues long: Pyruvate synthase subunit PorD (105 aa).

4Fe-4S ferredoxin-type domains are found at residues 44-73 and 74-103; these read FKPE…LDEE and GYPV…MVRE. [4Fe-4S] cluster contacts are provided by C53, C56, C59, C63, C83, C86, C89, and C93.

As to quaternary structure, heterotetramer of one alpha, one beta, one delta and one gamma chain. Requires [4Fe-4S] cluster as cofactor.

This is Pyruvate synthase subunit PorD (porD) from Pyrococcus furiosus (strain ATCC 43587 / DSM 3638 / JCM 8422 / Vc1).